Reading from the N-terminus, the 156-residue chain is 1-methylthio-D-xylulose 5-phosphate methylsulfurylase (156 aa).

The Cupin type-2 domain maps to 55–122 (YFEVGPGGHS…ADEALGFLCM (68 aa)). 4 residues coordinate Mn(2+): glutamate 67, histidine 69, histidine 73, and histidine 107. Residue cysteine 121 is part of the active site.

The enzyme catalyses S-methyl-1-thio-D-xylulose 5-phosphate + glutathione = S-(methylsulfanyl)glutathione + 1-deoxy-D-xylulose 5-phosphate. It carries out the reaction S-(methylsulfanyl)glutathione + AH2 = methanethiol + glutathione + A. It functions in the pathway amino-acid biosynthesis; L-methionine biosynthesis via salvage pathway. Its pathway is metabolic intermediate biosynthesis; 1-deoxy-D-xylulose 5-phosphate biosynthesis. Its function is as follows. Catalyzes the formation of S-(methylsulfanyl)glutathione and 1-deoxy-D-xylulose 5-phosphate (DXP) from 1-methylthioxylulose 5-phosphate (MTXu-5P). The S-(methylsulfanyl)glutathione is reductively cleaved to relase methanethiol in a second reaction. Involved in the MTA-isoprenoid shunt of the methionine salvage pathway. This chain is 1-methylthio-D-xylulose 5-phosphate methylsulfurylase, found in Rhodospirillum rubrum (strain ATCC 11170 / ATH 1.1.1 / DSM 467 / LMG 4362 / NCIMB 8255 / S1).